Reading from the N-terminus, the 544-residue chain is Chaperonin GroEL (544 aa).

Residues 30–33, Lys51, 87–91, Gly415, 479–481, and Asp495 contribute to the ATP site; these read TLGP, DGTTT, and NAA.

Belongs to the chaperonin (HSP60) family. In terms of assembly, forms a cylinder of 14 subunits composed of two heptameric rings stacked back-to-back. Interacts with the co-chaperonin GroES.

It localises to the cytoplasm. The enzyme catalyses ATP + H2O + a folded polypeptide = ADP + phosphate + an unfolded polypeptide.. Its function is as follows. Together with its co-chaperonin GroES, plays an essential role in assisting protein folding. The GroEL-GroES system forms a nano-cage that allows encapsulation of the non-native substrate proteins and provides a physical environment optimized to promote and accelerate protein folding. This chain is Chaperonin GroEL, found in Francisella tularensis subsp. holarctica (strain FTNF002-00 / FTA).